Consider the following 149-residue polypeptide: Large ribosomal subunit protein bL20m (149 aa).

A mitochondrion-targeting transit peptide spans 1-9; that stretch reads MVFLTAQLW.

This sequence belongs to the bacterial ribosomal protein bL20 family. As to quaternary structure, component of the mitochondrial large ribosomal subunit (mt-LSU). Mature mammalian 55S mitochondrial ribosomes consist of a small (28S) and a large (39S) subunit. The 28S small subunit contains a 12S ribosomal RNA (12S mt-rRNA) and 30 different proteins. The 39S large subunit contains a 16S rRNA (16S mt-rRNA), a copy of mitochondrial valine transfer RNA (mt-tRNA(Val)), which plays an integral structural role, and 52 different proteins. Interacts with OXA1L.

It localises to the mitochondrion. The chain is Large ribosomal subunit protein bL20m (MRPL20) from Homo sapiens (Human).